Reading from the N-terminus, the 541-residue chain is Metal transporter Nramp1 (541 aa).

N-linked (GlcNAc...) asparagine glycosylation occurs at N17. The next 10 helical transmembrane spans lie at 45–65, 78–98, 122–142, 153–173, 182–202, 222–242, 271–291, 315–335, 371–391, and 392–412; these read LFAY…PGNF, ELLW…SLAA, FILW…EVIG, IPVW…LALQ, LFIA…LGYA, GAAG…NLFL, GFAL…SGAV, FLLE…ALLA, SLAI…GAGK, and LIII…VPLL. A glycan (N-linked (GlcNAc...) asparagine) is linked at N426. A run of 2 helical transmembrane segments spans residues 430 to 450 and 465 to 485; these read ISSI…YYLA and VAAI…LAGV. An N-linked (GlcNAc...) asparagine glycan is attached at N511.

This sequence belongs to the NRAMP (TC 2.A.55) family.

The protein resides in the membrane. In terms of biological role, probable divalent metal transporter. This Populus trichocarpa (Western balsam poplar) protein is Metal transporter Nramp1.